Here is a 270-residue protein sequence, read N- to C-terminus: 1-deoxy-11-beta-hydroxypentalenate dehydrogenase (270 aa).

12-36 (GAASGIGFALSARLAQAGARVVMTD) lines the NAD(+) pocket. Ser-144 is a binding site for substrate. The active-site Proton acceptor is the Tyr-157. Lys-161 is an NAD(+) binding site.

This sequence belongs to the short-chain dehydrogenases/reductases (SDR) family.

The enzyme catalyses 1-deoxy-11beta-hydroxypentalenate + NAD(+) = 1-deoxy-11-oxopentalenate + NADH + H(+). It participates in antibiotic biosynthesis; neopentalenolactone biosynthesis. Its function is as follows. Catalyzes the oxidation of 1-deoxy-11-beta-hydroxypentalenic acid to 1-deoxy-11-oxopentalenic acid in the biosynthesis of neopentalenolactone antibiotic. This Streptomyces avermitilis (strain ATCC 31267 / DSM 46492 / JCM 5070 / NBRC 14893 / NCIMB 12804 / NRRL 8165 / MA-4680) protein is 1-deoxy-11-beta-hydroxypentalenate dehydrogenase (ptlF).